The chain runs to 358 residues: Gibberellin 2-beta-dioxygenase 6 (358 aa).

A Fe2OG dioxygenase domain is found at 207–308 (DETTCFLRLN…RLSVAYFLCP (102 aa)). Tyr218 contacts 2-oxoglutarate. His233, Asp235, and His289 together coordinate Fe cation. 2-oxoglutarate-binding residues include Arg299 and Ser301.

This sequence belongs to the iron/ascorbate-dependent oxidoreductase family. GA2OX subfamily. Requires L-ascorbate as cofactor. The cofactor is Fe(2+). Expressed in panicles. Expressed at low levels in young shoots, leaf blades and elongating internodes.

It localises to the cytoplasm. Its subcellular location is the nucleus. It catalyses the reaction gibberellin A1 + 2-oxoglutarate + O2 = gibberellin A8 + succinate + CO2. Functionally, catalyzes the 2-beta-hydroxylation of several biologically active gibberellins, leading to the homeostatic regulation of their endogenous level. Catabolism of gibberellins (GAs) plays a central role in plant development. In vitro, converts GA12 and GA53 to the corresponding 2-beta-hydroxylated products GA110 and GA97, respectively. The polypeptide is Gibberellin 2-beta-dioxygenase 6 (Oryza sativa subsp. japonica (Rice)).